The following is a 343-amino-acid chain: Fructose-bisphosphate aldolase (343 aa).

Ser-53 lines the D-glyceraldehyde 3-phosphate pocket. Asp-95 (proton donor) is an active-site residue. Positions 96, 131, 161, and 212 each coordinate Zn(2+). Position 213 (Gly-213) interacts with dihydroxyacetone phosphate. Residue His-252 participates in Zn(2+) binding. Residues 253-255 (GGS) and 274-277 (NIDT) contribute to the dihydroxyacetone phosphate site.

Belongs to the class II fructose-bisphosphate aldolase family. It depends on Zn(2+) as a cofactor.

The enzyme catalyses beta-D-fructose 1,6-bisphosphate = D-glyceraldehyde 3-phosphate + dihydroxyacetone phosphate. It participates in carbohydrate degradation; glycolysis; D-glyceraldehyde 3-phosphate and glycerone phosphate from D-glucose: step 4/4. Its function is as follows. Catalyzes the aldol condensation of dihydroxyacetone phosphate (DHAP or glycerone-phosphate) with glyceraldehyde 3-phosphate (G3P) to form fructose 1,6-bisphosphate (FBP) in gluconeogenesis and the reverse reaction in glycolysis. The polypeptide is Fructose-bisphosphate aldolase (fba) (Streptomyces coelicolor (strain ATCC BAA-471 / A3(2) / M145)).